The primary structure comprises 463 residues: uncharacterized protein (463 aa).

One can recognise a PE domain in the interval 1–93 (MSYMIAVPDM…AGAYASAEAT (93 aa)). Disordered regions lie at residues 231 to 320 (GGAG…AGNG) and 408 to 463 (NGGD…TPGQ). Gly residues predominate over residues 408 to 451 (NGGDGGKGGDAQLIGNGGNGGNGGKGGTGLMPGINGTGGAGGSR).

This sequence belongs to the mycobacterial PE family. PGRS subfamily.

This is an uncharacterized protein from Mycobacterium tuberculosis (strain ATCC 25618 / H37Rv).